We begin with the raw amino-acid sequence, 115 residues long: Large ribosomal subunit protein bL19 (115 aa).

This sequence belongs to the bacterial ribosomal protein bL19 family.

Functionally, this protein is located at the 30S-50S ribosomal subunit interface and may play a role in the structure and function of the aminoacyl-tRNA binding site. This Lawsonia intracellularis (strain PHE/MN1-00) protein is Large ribosomal subunit protein bL19.